A 445-amino-acid polypeptide reads, in one-letter code: ATP-dependent protease ATPase subunit HslU (445 aa).

Residues Ile18, 60–65 (GVGKTE), Asp258, Glu323, and Arg395 each bind ATP.

It belongs to the ClpX chaperone family. HslU subfamily. In terms of assembly, a double ring-shaped homohexamer of HslV is capped on each side by a ring-shaped HslU homohexamer. The assembly of the HslU/HslV complex is dependent on binding of ATP.

The protein resides in the cytoplasm. In terms of biological role, ATPase subunit of a proteasome-like degradation complex; this subunit has chaperone activity. The binding of ATP and its subsequent hydrolysis by HslU are essential for unfolding of protein substrates subsequently hydrolyzed by HslV. HslU recognizes the N-terminal part of its protein substrates and unfolds these before they are guided to HslV for hydrolysis. The sequence is that of ATP-dependent protease ATPase subunit HslU from Syntrophotalea carbinolica (strain DSM 2380 / NBRC 103641 / GraBd1) (Pelobacter carbinolicus).